We begin with the raw amino-acid sequence, 1031 residues long: MGPCHGALHPLSLLVQAAALAVALAQGTLPAFLPCELQRHGLVNCDWLFLKSVPHFSAAAPRGNVTSLSLYSNRIHHLHDSDFVHLSSLRRLNLKWNCPPASLSPMHFPCHMTIEPHTFLAVPTLEELNLSYNSITTVPALPSSLVSLSLSRTNILVLDPANLAGLHSLRFLFLDGNCYYKNPCPQALQVAPGALLGLGNLTHLSLKYNNLTAVPRGLPPSLEYLLLSYNHIITLAPEDLANLTALRVLDVGGNCRRCDHARNPCMECPKGFPHLHPDTFSHLNHLEGLVLKDSSLYNLNPRWFHALGNLMVLDLSENFLYDCITKTTAFQGLAQLRRLNLSFNYHKKVSFAHLHLAPSFGSLLSLQQLDMHGIFFRSLSETTLRSLVHLPMLQSLHLQMNFINQAQLSIFGAFPGLRYVDLSDNRISGAMELAAATGEVDGGERVRLPSGDLALGPPGTPSSEGFMPGCKTLNFTLDLSRNNLVTIQPEMFARLSRLQCLLLSRNSISQAVNGSQFMPLTSLQVLDLSHNKLDLYHGRSFTELPRLEALDLSYNSQPFSMQGVGHNLSFVAQLPALRYLSLAHNDIHSRVSQQLCSASLRALDFSGNALSRMWAEGDLYLHFFRGLRSLVRLDLSQNRLHTLLPRTLDNLPKSLRLLRLRDNYLAFFNWSSLVLLPRLEALDLAGNQLKALSNGSLPNGTQLQRLDLSSNSISFVASSFFALATRLRELNLSANALKTVEPSWFGSLAGTLKVLDVTGNPLHCACGAAFVDFLLEVQAAVPGLPGHVKCGSPGQLQGRSIFAQDLRLCLDEALSWDCFGLSLLTVALGLAVPMLHHLCGWDLWYCFHLCLAWLPRRGRRRGADALPYDAFVVFDKAQSAVADWVYNELRVRLEERRGRRALRLCLEERDWLPGKTLFENLWASVYSSRKMLFVLAHTDRVSGLLRASFLLAQQRLLEDRKDVVVLVILRPDAHRSRYVRLRQRLCRQSVLLWPHQPSGQRSFWAQLGTALTRDNQHFYNQNFCRGPTTAE.

An N-terminal signal peptide occupies residues 1-25 (MGPCHGALHPLSLLVQAAALAVALA). Over 26 to 817 (QGTLPAFLPC…LCLDEALSWD (792 aa)) the chain is Extracellular. C35 and C45 are disulfide-bonded. 47 to 51 (WLFLK) lines the DNA pocket. LRR repeat units follow at residues 62–85 (RGNV…DFVH), 87–110 (SSLR…HFPC), 122–147 (VPTL…SLVS), 150–166 (LSRT…LAGL), 167–190 (HSLR…ALQV), 198–221 (LGNL…LPPS), 223–242 (EYLL…DLAN), 243–268 (LTAL…CMEC), 283–306 (LNHL…WFHA), 308–332 (GNLM…AFQG), 333–356 (LAQL…HLHL), 363–386 (LLSL…TLRS), 390–413 (LPML…IFGA), 415–440 (PGLR…TGEV), 470–494 (CKTL…MFAR), 496–519 (SRLQ…QFMP), 520–543 (LTSL…SFTE), 545–572 (PRLE…SFVA), 574–598 (LPAL…LCSA), 600–622 (LRAL…LYLH), 627–650 (LRSL…TLDN), 652–675 (PKSL…SLVL), 676–699 (LPRL…SLPN), 701–723 (TQLQ…FFAL), 724–747 (ATRL…WFGS), and 749–772 (AGTL…AFVD). A glycan (N-linked (GlcNAc...) asparagine) is linked at N64. DNA-binding positions include 72–77 (SNRIHH) and 95–109 (KWNC…MHFP). Cysteines 98 and 110 form a disulfide. A glycan (N-linked (GlcNAc...) asparagine) is linked at N129. DNA contacts are provided by residues Y132, R152, and 179 to 181 (YYK). C178 and C184 form a disulfide bridge. N200 carries an N-linked (GlcNAc...) asparagine glycan. Residue Y208 coordinates DNA. N210 and N242 each carry an N-linked (GlcNAc...) asparagine glycan. Cystine bridges form between C255–C268 and C258–C265. C258 is lipidated: S-palmitoyl cysteine. R262 is a binding site for DNA. C265 carries the S-palmitoyl cysteine lipid modification. N-linked (GlcNAc...) asparagine glycosylation occurs at N340. An intrachain disulfide couples C470 to C500. 2 N-linked (GlcNAc...) asparagine glycosylation sites follow: N474 and N513. N-linked (GlcNAc...) asparagine glycosylation occurs at N567. N-linked (GlcNAc...) asparagine glycosylation is found at N669, N694, and N699. N731 carries N-linked (GlcNAc...) asparagine glycosylation. Disulfide bonds link C764-C790 and C766-C809. Residues 818 to 838 (CFGLSLLTVALGLAVPMLHHL) form a helical membrane-spanning segment. The Cytoplasmic segment spans residues 839-1031 (CGWDLWYCFH…NFCRGPTTAE (193 aa)). In terms of domain architecture, TIR spans 866-1011 (LPYDAFVVFD…SFWAQLGTAL (146 aa)).

It belongs to the Toll-like receptor family. As to quaternary structure, monomer and homodimer. Exists as a monomer in the absence of unmethylated cytidine-phosphate-guanosine (CpG) ligand. Proteolytic processing of an insertion loop (Z-loop) is required for homodimerization upon binding to the unmethylated CpG ligand leading to its activation. Interacts with MYD88 via their respective TIR domains. Interacts with BTK. Interacts (via transmembrane domain) with UNC93B1. Interacts with CD300LH; the interaction may promote full activation of TLR9-triggered innate responses. Interacts with CNPY3 and HSP90B1; this interaction is required for proper folding in the endoplasmic reticulum. Interacts with SMPDL3B. Interacts with CD82; this interaction is essential for TLR9-dependent myddosome formation in response to CpG stimulation. Activated by proteolytic cleavage of the flexible loop between repeats LRR14 and LRR15 within the ectodomain. Cleavage requires UNC93B1. Proteolytically processed by first removing the majority of the ectodomain by either asparagine endopeptidase (AEP) or a cathepsin followed by a trimming event that is solely cathepsin mediated and required for optimal receptor signaling. Post-translationally, palmitoylated by ZDHHC3 in the Golgi regulates TLR9 trafficking from the Golgi to endosomes. Depalmitoylation by PPT1 controls the release of TLR9 from UNC93B1 in endosomes.

The protein localises to the endoplasmic reticulum membrane. The protein resides in the endosome. It localises to the lysosome. Its subcellular location is the cytoplasmic vesicle. It is found in the phagosome. Key component of innate and adaptive immunity. TLRs (Toll-like receptors) control host immune response against pathogens through recognition of molecular patterns specific to microorganisms. TLR9 is a nucleotide-sensing TLR which is activated by unmethylated cytidine-phosphate-guanosine (CpG) dinucleotides. Acts via MYD88 and TRAF6, leading to NF-kappa-B activation, cytokine secretion and the inflammatory response. Upon CpG stimulation, induces B-cell proliferation, activation, survival and antibody production. The sequence is that of Toll-like receptor 9 (TLR9) from Felis catus (Cat).